The following is an 81-amino-acid chain: RNA-binding protein Hfq (81 aa).

The Sm domain maps to 10–69; that stretch reads DPFLNTLRKEHIPVSIYLVNGIKLQGHIDSFDQYVVLLKNTVTQMVYKHAISTVVPARAV.

The protein belongs to the Hfq family. As to quaternary structure, homohexamer.

In terms of biological role, RNA chaperone that binds small regulatory RNA (sRNAs) and mRNAs to facilitate mRNA translational regulation in response to envelope stress, environmental stress and changes in metabolite concentrations. Also binds with high specificity to tRNAs. This is RNA-binding protein Hfq from Nitrosospira multiformis (strain ATCC 25196 / NCIMB 11849 / C 71).